Consider the following 64-residue polypeptide: Large ribosomal subunit protein bL33 (64 aa).

This sequence belongs to the bacterial ribosomal protein bL33 family.

The protein is Large ribosomal subunit protein bL33 of Microcystis aeruginosa (strain NIES-843 / IAM M-2473).